A 673-amino-acid polypeptide reads, in one-letter code: DNA mismatch repair protein MutL (673 aa).

It belongs to the DNA mismatch repair MutL/HexB family.

Functionally, this protein is involved in the repair of mismatches in DNA. It is required for dam-dependent methyl-directed DNA mismatch repair. May act as a 'molecular matchmaker', a protein that promotes the formation of a stable complex between two or more DNA-binding proteins in an ATP-dependent manner without itself being part of a final effector complex. The protein is DNA mismatch repair protein MutL of Ehrlichia chaffeensis (strain ATCC CRL-10679 / Arkansas).